We begin with the raw amino-acid sequence, 1495 residues long: Collagen alpha-1(XVII) chain (1495 aa).

Basic and acidic residues predominate over residues 1 to 17 (MDSVTKKTRQDGSEVTE). The segment at 1–138 (MDSVTKKTRQ…VRLQSASPSG (138 aa)) is disordered. At 1–435 (MDSVTKKTRQ…CGSCCSWWKW (435 aa)) the chain is on the cytoplasmic side. The tract at residues 1-535 (MDSVTKKTRQ…IERGYFRGER (535 aa)) is nonhelical region (NC16). The segment covering 19 to 32 (QGGSSSGLKTSSHT) has biased composition (polar residues). The segment covering 51-63 (SSGSGRLNSSSSG) has biased composition (low complexity). Polar residues-rich tracts occupy residues 64–80 (YRQTQSPSSTLTKSPGS) and 95–104 (EGSSSANSSP). The helical; Signal-anchor for type II membrane protein transmembrane segment at 436–456 (LLGLLLAWLLLLGLLFGLIAL) threads the bilayer. Residues 457–1495 (AEEVRKLKSR…GRRRRRSVGV (1039 aa)) are Extracellular-facing. Disordered stretches follow at residues 532–824 (RGER…EKGS), 847–999 (DLQG…SSSQ), 1160–1185 (EFSGLVGPPGPAGPPGPPGIPGSSGI), 1201–1226 (SISGIQGPPGPPGPPGPPGFSGTGLL), 1251–1278 (RSYISGPPGPPGPRGPPGPKGDSGLVAG), 1295–1336 (GGSI…GSYG), and 1396–1416 (MSYTGQGPPGPPGPPGPPGIS). Residues 536 to 1482 (GEPGMKGDMG…KGEKGEKGEQ (947 aa)) are triple-helical region. Low complexity-rich tracts occupy residues 702–711 (PGAKGPAGQA) and 761–773 (RPGAKGEPGAPGK). Pro residues predominate over residues 786 to 807 (PGPPGPPGPIGPTGPPGVPGPV). Low complexity predominate over residues 809 to 818 (PAGLPGQQGP). Pro residues-rich tracts occupy residues 871 to 886 (PRGPPGLPGPSGPPGR), 901 to 910 (PPGPPGPPGP), 946 to 955 (PPGPPGPPGP), 981 to 993 (PPGPPGPPGPPGP), 1167 to 1179 (PPGPAGPPGPPGI), 1208 to 1218 (PPGPPGPPGPP), and 1257 to 1269 (PPGPPGPRGPPGP). Positions 1296–1308 (GSIGAEGSHGGSL) are enriched in gly residues. Over residues 1309–1336 (GASSSYGSSMSSSMSSYSASMGSDGSYG) the composition is skewed to low complexity. A compositionally biased stretch (pro residues) spans 1403 to 1413 (PPGPPGPPGPP). Residue asparagine 1424 is glycosylated (N-linked (GlcNAc...) asparagine). A disordered region spans residues 1435 to 1495 (THGTVRGPPG…GRRRRRSVGV (61 aa)). The span at 1472–1481 (PKGEKGEKGE) shows a compositional bias: basic and acidic residues. The interval 1483–1495 (MYSGRRRRRSVGV) is nonhelical region (NC1). Over residues 1486–1495 (GRRRRRSVGV) the composition is skewed to basic residues.

As to quaternary structure, homotrimers of alpha 1(XVII)chains. In terms of processing, the intracellular/endo domain is disulfide-linked. Prolines at the third position of the tripeptide repeating unit (G-X-Y) are hydroxylated in some or all of the chains. Post-translationally, the ectodomain is shedded from the surface of keratinocytes resulting in a 120-kDa soluble form, also named as 120 kDa linear IgA disease antigen homolog. The shedding is mediated by membrane-bound metalloproteases. In terms of tissue distribution, cornea specific.

It localises to the cell junction. The protein resides in the hemidesmosome. Its subcellular location is the membrane. The protein localises to the secreted. It is found in the extracellular space. It localises to the extracellular matrix. The protein resides in the basement membrane. Its function is as follows. May play a role in the integrity of hemidesmosome and the attachment of basal keratinocytes to the underlying basement membrane. Functionally, the 120 kDa linear IgA disease antigen homolog is an anchoring filament component involved in dermal-epidermal cohesion. The protein is Collagen alpha-1(XVII) chain (COL17A1) of Gallus gallus (Chicken).